We begin with the raw amino-acid sequence, 102 residues long: Putative pterin-4-alpha-carbinolamine dehydratase (102 aa).

The protein belongs to the pterin-4-alpha-carbinolamine dehydratase family.

The enzyme catalyses (4aS,6R)-4a-hydroxy-L-erythro-5,6,7,8-tetrahydrobiopterin = (6R)-L-erythro-6,7-dihydrobiopterin + H2O. The protein is Putative pterin-4-alpha-carbinolamine dehydratase of Burkholderia ambifaria (strain MC40-6).